Reading from the N-terminus, the 121-residue chain is Large ribosomal subunit protein bL12 (121 aa).

The protein belongs to the bacterial ribosomal protein bL12 family. As to quaternary structure, homodimer. Part of the ribosomal stalk of the 50S ribosomal subunit. Forms a multimeric L10(L12)X complex, where L10 forms an elongated spine to which 2 to 4 L12 dimers bind in a sequential fashion. Binds GTP-bound translation factors.

Functionally, forms part of the ribosomal stalk which helps the ribosome interact with GTP-bound translation factors. Is thus essential for accurate translation. In Salmonella agona (strain SL483), this protein is Large ribosomal subunit protein bL12.